Here is a 293-residue protein sequence, read N- to C-terminus: Protein translocase subunit SecF (293 aa).

The next 6 membrane-spanning stretches (helical) occupy residues 10-30 (ARIF…SMFA), 130-150 (VKSA…YITI), 158-178 (LAAI…FSVL), 185-205 (SFVA…IVVF), 244-264 (LFAV…FSFA), and 267-287 (VGFC…WLFF).

Belongs to the SecD/SecF family. SecF subfamily. Forms a complex with SecD. Part of the essential Sec protein translocation apparatus which comprises SecA, SecYEG and auxiliary proteins SecDF. Other proteins may also be involved.

It is found in the cell membrane. Its function is as follows. Part of the Sec protein translocase complex. Interacts with the SecYEG preprotein conducting channel. SecDF uses the proton motive force (PMF) to complete protein translocation after the ATP-dependent function of SecA. The chain is Protein translocase subunit SecF from Acidaminococcus fermentans (strain ATCC 25085 / DSM 20731 / CCUG 9996 / CIP 106432 / VR4).